Reading from the N-terminus, the 431-residue chain is MFIAVVGLSHRTAPVEIRERLSIPEAEVGERIQQLRAHPHIEEAAILSTCNRLEVYIVTPEMESGVRQTMQFLAEAKGIPLPQLRPHLFTLLYQDAVTHLMRVAAGLDSLVLGEGQILSQVKKAQQLGQACNGMDRILNRLFKAAITAGKRIRTETGIGTGAMSISSAAVELALQEQGSLSQGKVTVVGAGKMARLLVQHLLAKGAVDITVVNRSLERAEALAKQFEQPIQVLPWESLLSSIAESNLVFTSTGATQPILTYEQLAGVLQPDQPLLLVDISVPRNIDPGVEKLRGVQVFNVDHLSRIVEENRAQRQKLALAAEALVEEEVEQFMEWWRSLETVPTISSLRHKVESIREQEMEKALSRLGKDFAEKHLEVIEALTRGIVNKILHDPMVQLRAQRDIEARRRAMQILQELFNLDPMPFQAQQER.

Residues 49 to 52 (TCNR), Ser109, 114 to 116 (EGQ), and Gln120 each bind substrate. The active-site Nucleophile is the Cys50. An NADP(+)-binding site is contributed by 189–194 (GAGKMA).

The protein belongs to the glutamyl-tRNA reductase family. As to quaternary structure, homodimer.

The catalysed reaction is (S)-4-amino-5-oxopentanoate + tRNA(Glu) + NADP(+) = L-glutamyl-tRNA(Glu) + NADPH + H(+). It functions in the pathway porphyrin-containing compound metabolism; protoporphyrin-IX biosynthesis; 5-aminolevulinate from L-glutamyl-tRNA(Glu): step 1/2. It participates in porphyrin-containing compound metabolism; chlorophyll biosynthesis. Its function is as follows. Catalyzes the NADPH-dependent reduction of glutamyl-tRNA(Glu) to glutamate 1-semialdehyde (GSA). This Synechococcus sp. (strain JA-3-3Ab) (Cyanobacteria bacterium Yellowstone A-Prime) protein is Glutamyl-tRNA reductase.